The sequence spans 149 residues: Ribosome-binding factor A (149 aa).

Residues 124-149 (AKLREGAVPAGDADPYKTSSKSESEE) form a disordered region.

Belongs to the RbfA family. In terms of assembly, monomer. Binds 30S ribosomal subunits, but not 50S ribosomal subunits or 70S ribosomes.

The protein localises to the cytoplasm. Functionally, one of several proteins that assist in the late maturation steps of the functional core of the 30S ribosomal subunit. Associates with free 30S ribosomal subunits (but not with 30S subunits that are part of 70S ribosomes or polysomes). Required for efficient processing of 16S rRNA. May interact with the 5'-terminal helix region of 16S rRNA. The sequence is that of Ribosome-binding factor A from Corynebacterium glutamicum (strain R).